The primary structure comprises 152 residues: MAEIDSAQSQETVTQETQNKPMTTSFSIWPPTQRTRDAVINRLIESLSTPSILSKRYGTLPQDEASETARLIEEEAFAAAGSTASDADDGIEILQVYSKEISKRMIDTVKSRSAPAAASEGESKPSELPADASEPSSASGLTGEVSSVETEP.

2 disordered regions span residues 1–33 (MAEI…PPTQ) and 107–152 (DTVK…ETEP). The segment at 12 to 115 (TVTQETQNKP…IDTVKSRSAP (104 aa)) is WPP. Polar residues predominate over residues 134 to 152 (EPSSASGLTGEVSSVETEP).

As to quaternary structure, interacts with WAP through its WPP domain. Binds to MFP1 and FPP proteins. Expressed in young tomato leaves, young fruits, and flowers (at protein level).

Its subcellular location is the nucleus envelope. It localises to the cytoplasm. The protein localises to the golgi apparatus. It is found in the nucleus. The protein resides in the nucleus matrix. This is MFP1 attachment factor 1 (MAF1) from Solanum lycopersicum (Tomato).